The following is a 190-amino-acid chain: Elongation factor P (190 aa).

Belongs to the elongation factor P family.

It is found in the cytoplasm. The protein operates within protein biosynthesis; polypeptide chain elongation. Its function is as follows. Involved in peptide bond synthesis. Stimulates efficient translation and peptide-bond synthesis on native or reconstituted 70S ribosomes in vitro. Probably functions indirectly by altering the affinity of the ribosome for aminoacyl-tRNA, thus increasing their reactivity as acceptors for peptidyl transferase. The chain is Elongation factor P from Sulfurihydrogenibium sp. (strain YO3AOP1).